The following is an 894-amino-acid chain: DNA mismatch repair protein MutS (894 aa).

607-614 (GPNMSGKS) serves as a coordination point for ATP.

Belongs to the DNA mismatch repair MutS family.

In terms of biological role, this protein is involved in the repair of mismatches in DNA. It is possible that it carries out the mismatch recognition step. This protein has a weak ATPase activity. This chain is DNA mismatch repair protein MutS, found in Bacillus cereus (strain ZK / E33L).